The sequence spans 136 residues: ATP synthase epsilon chain (136 aa).

The tract at residues 112–136 (GNSADKLKAKESLNKARARSQAVGE) is disordered. The segment covering 116-125 (DKLKAKESLN) has biased composition (basic and acidic residues).

This sequence belongs to the ATPase epsilon chain family. In terms of assembly, F-type ATPases have 2 components, CF(1) - the catalytic core - and CF(0) - the membrane proton channel. CF(1) has five subunits: alpha(3), beta(3), gamma(1), delta(1), epsilon(1). CF(0) has three main subunits: a, b and c.

The protein resides in the cellular thylakoid membrane. Functionally, produces ATP from ADP in the presence of a proton gradient across the membrane. The chain is ATP synthase epsilon chain from Prochlorococcus marinus (strain SARG / CCMP1375 / SS120).